The following is a 372-amino-acid chain: Glutamate 5-kinase (372 aa).

Position 14 (K14) interacts with ATP. Substrate-binding residues include S55, D142, and N154. Residues 174–175 and 216–222 each bind ATP; these read SD and TGGMETK. A PUA domain is found at 279 to 357; that stretch reads QGSIIVDLGA…WEIADVLGHK (79 aa).

It belongs to the glutamate 5-kinase family.

The protein localises to the cytoplasm. The catalysed reaction is L-glutamate + ATP = L-glutamyl 5-phosphate + ADP. It functions in the pathway amino-acid biosynthesis; L-proline biosynthesis; L-glutamate 5-semialdehyde from L-glutamate: step 1/2. In terms of biological role, catalyzes the transfer of a phosphate group to glutamate to form L-glutamate 5-phosphate. The polypeptide is Glutamate 5-kinase (Carboxydothermus hydrogenoformans (strain ATCC BAA-161 / DSM 6008 / Z-2901)).